A 1325-amino-acid chain; its full sequence is Bile salt export pump (1325 aa).

The Cytoplasmic segment spans residues 1–62; the sequence is MSDAVILRSV…FSSTTDIWLM (62 aa). The region spanning 62–385 is the ABC transmembrane type-1 1 domain; sequence MFVGSLCAFL…ASSCLEAFAT (324 aa). Residues 63-83 form a helical membrane-spanning segment; it reads FVGSLCAFLHGLSHPGVLLIF. Over 84–147 the chain is Extracellular; it reads GTMTDVFIAY…MIKFASYYAG (64 aa). N-linked (GlcNAc...) asparagine glycosylation is found at Asn-109, Asn-116, Asn-122, and Asn-125. The chain crosses the membrane as a helical span at residues 148–168; that stretch reads IALLVLITGYIQICFWVIAAA. Residues 169-240 are Cytoplasmic-facing; it reads RQIQKMRKIS…FLLGFYQGWK (72 aa). Residues 241-261 traverse the membrane as a helical segment; sequence LTLVIISVSPLIGIGAAIIGL. Over 262–319 the chain is Extracellular; sequence SVSKFTDYELKAYAKAGSVADEVISSMRTVAAFGGEKKEVERYEKNLVFAQRWGIRKG. Residues 320–340 form a helical membrane-spanning segment; the sequence is IVMGFFTGFMWCLIFLCYALA. Residues 341-353 lie on the Cytoplasmic side of the membrane; that stretch reads FWYGSKLVLEDGE. The helical transmembrane segment at 354–374 threads the bilayer; sequence YTAGTLVQIFLSILLGALNLG. Asn-375, Asn-424, and Asn-440 each carry an N-linked (GlcNAc...) asparagine glycan. The Extracellular portion of the chain corresponds to 375–759; it reads NASSCLEAFA…KFNAPEWPYM (385 aa). One can recognise an ABC transporter 1 domain in the interval 420–656; sequence IEFHNVTFHY…KGVYFTLVTL (237 aa). Residue 455–462 participates in ATP binding; sequence GSSGSGKS. Asn-591 is a glycosylation site (N-linked (GlcNAc...) asparagine). An ABC transmembrane type-1 2 domain is found at 759 to 1047; that stretch reads MLFGAVGAAV…ASSYTPSYAK (289 aa). A helical transmembrane segment spans residues 760-780; it reads LFGAVGAAVNGSVTPLYAFLF. At 781–798 the chain is on the cytoplasmic side; sequence SQILGTFSLPDKEEQRSQ. Residues 799-819 traverse the membrane as a helical segment; that stretch reads INGVCLLFVAVGCVSLCTQFL. The Extracellular segment spans residues 820-894; the sequence is QGYAFAKSGE…NSFTNVTVAM (75 aa). N-linked (GlcNAc...) asparagine glycosylation is present at Asn-889. A helical transmembrane segment spans residues 895–915; it reads IIAFFFSWKLSLVIMCFFPFL. The Cytoplasmic portion of the chain corresponds to 916–983; it reads ALSGALQTRM…PFKTAFRKAN (68 aa). The chain crosses the membrane as a helical span at residues 984 to 1004; sequence VYGFCFGFSQCIVFVANSASY. The Extracellular portion of the chain corresponds to 1005 to 1014; the sequence is RYGGYLIPNE. Residues 1015–1035 traverse the membrane as a helical segment; it reads GLHFSYVFRVISSVVLSATAL. Residues 1036–1325 are Cytoplasmic-facing; the sequence is GRASSYTPSY…KLVTTGAPIS (290 aa). One can recognise an ABC transporter 2 domain in the interval 1082–1320; that stretch reads VDFVDCKFTY…KGAYYKLVTT (239 aa). Position 1117–1124 (1117–1124) interacts with ATP; sequence GSSGCGKS.

Belongs to the ABC transporter superfamily. ABCB family. Multidrug resistance exporter (TC 3.A.1.201) subfamily. As to quaternary structure, interacts with HAX1. Interacts with the adapter protein complex 2 (AP-2) throught AP2A2 or AP2A1; this interaction regulates cell membrane expression of ABCB11 through its internalization in a clathrin-dependent manner and its subsequent degradation. In terms of processing, N-glycosylated. Post-translationally, ubiquitinated; short-chain ubiquitination regulates cell-Surface expression of ABCB11. Liver.

It localises to the apical cell membrane. The protein resides in the recycling endosome membrane. It is found in the endosome. Its subcellular location is the cell membrane. The enzyme catalyses cholate(in) + ATP + H2O = cholate(out) + ADP + phosphate + H(+). The catalysed reaction is taurocholate(in) + ATP + H2O = taurocholate(out) + ADP + phosphate + H(+). It catalyses the reaction glycocholate(in) + ATP + H2O = glycocholate(out) + ADP + phosphate + H(+). It carries out the reaction glycochenodeoxycholate(in) + ATP + H2O = glycochenodeoxycholate(out) + ADP + phosphate + H(+). The enzyme catalyses taurochenodeoxycholate(in) + ATP + H2O = taurochenodeoxycholate(out) + ADP + phosphate + H(+). The catalysed reaction is glycoursodeoxycholate(in) + ATP + H2O = glycoursodeoxycholate(out) + ADP + phosphate + H(+). It catalyses the reaction tauroursodeoxycholate(in) + ATP + H2O = tauroursodeoxycholate(out) + ADP + phosphate + H(+). It carries out the reaction taurodeoxycholate(in) + ATP + H2O = taurodeoxycholate(out) + ADP + phosphate + H(+). The enzyme catalyses taurolithocholate 3-sulfate(in) + ATP + H2O = taurolithocholate 3-sulfate(out) + ADP + phosphate + H(+). The catalysed reaction is pravastatin(in) + ATP + H2O = pravastatin(out) + ADP + phosphate + H(+). The uptake of taurocholate is inhibited by taurolithocholate sulfate with an IC(50) of 9 uM. Pravastatin competitively inhibits the transport of taurocholic acid. Cyclosporin A, glibenclamide, rifampicin and troglitazonestrongly competitively inhibit the transport activity of taurocholate. The canalicular transport activity of taurocholate is strongly dependent on canalicular membrane cholesterol content. The uptake of taurocholate is increased by short- and medium-chain fatty acids. Cholesterol increases transport capacity of taurocholate without affecting the affinity for the substrate. In terms of biological role, catalyzes the transport of the major hydrophobic bile salts, such as taurine and glycine-conjugated cholic acid across the canalicular membrane of hepatocytes in an ATP-dependent manner, therefore participates in hepatic bile acid homeostasis and consequently to lipid homeostasis through regulation of biliary lipid secretion in a bile salts dependent manner. Transports taurine-conjugated bile salts more rapidly than glycine-conjugated bile salts. Also transports non-bile acid compounds, such as pravastatin and fexofenadine in an ATP-dependent manner and may be involved in their biliary excretion. This chain is Bile salt export pump, found in Canis lupus familiaris (Dog).